A 314-amino-acid polypeptide reads, in one-letter code: Testis-specific Y-encoded protein 4 (314 aa).

It belongs to the nucleosome assembly protein (NAP) family.

It localises to the cytoplasm. The protein resides in the nucleus. Functionally, may be involved in sperm differentiation and proliferation. The sequence is that of Testis-specific Y-encoded protein 4 (TSPY4) from Homo sapiens (Human).